Here is a 404-residue protein sequence, read N- to C-terminus: Coenzyme F420H(2) oxidase (404 aa).

7 residues coordinate Fe cation: H84, E86, D88, H89, H152, D170, and H233. Residues 259–399 (VTVIYDTMHH…ACFEAGRRLA (141 aa)) enclose the Flavodoxin-like domain. FMN is bound by residues 265-270 (TMHHST), 317-320 (AIYD), and 351-356 (SMGGRG).

It in the N-terminal section; belongs to the zinc metallo-hydrolase group 3 family. FMN serves as cofactor. It depends on Fe cation as a cofactor.

The enzyme catalyses 2 reduced coenzyme F420-(gamma-L-Glu)(n) + O2 = 2 oxidized coenzyme F420-(gamma-L-Glu)(n) + 2 H2O + 2 H(+). Its function is as follows. Catalyzes the oxidation of F420H(2) with O(2). May be involved in O(2) detoxification, reducing the intracellular O(2) concentration to a level allowing growth at the expense of methane formation. The sequence is that of Coenzyme F420H(2) oxidase from Methanothermobacter thermautotrophicus (strain ATCC 29096 / DSM 1053 / JCM 10044 / NBRC 100330 / Delta H) (Methanobacterium thermoautotrophicum).